We begin with the raw amino-acid sequence, 523 residues long: GMP synthase [glutamine-hydrolyzing] (523 aa).

A Glutamine amidotransferase type-1 domain is found at 8 to 205; that stretch reads KILILDFGSQ…VVNICGCETK (198 aa). Cys85 functions as the Nucleophile in the catalytic mechanism. Active-site residues include His179 and Glu181. The GMPS ATP-PPase domain occupies 206–398; the sequence is WTAENIIEDA…LGLPAEMINR (193 aa). 233–239 is a binding site for ATP; sequence SGGVDSS.

Homodimer.

The enzyme catalyses XMP + L-glutamine + ATP + H2O = GMP + L-glutamate + AMP + diphosphate + 2 H(+). It functions in the pathway purine metabolism; GMP biosynthesis; GMP from XMP (L-Gln route): step 1/1. Its function is as follows. Catalyzes the synthesis of GMP from XMP. The polypeptide is GMP synthase [glutamine-hydrolyzing] (guaA) (Haemophilus influenzae (strain ATCC 51907 / DSM 11121 / KW20 / Rd)).